The primary structure comprises 160 residues: Small ribosomal subunit protein uS7 (160 aa).

The protein belongs to the universal ribosomal protein uS7 family. In terms of assembly, part of the 30S ribosomal subunit. Contacts proteins S9 and S11.

Functionally, one of the primary rRNA binding proteins, it binds directly to 16S rRNA where it nucleates assembly of the head domain of the 30S subunit. Is located at the subunit interface close to the decoding center, probably blocks exit of the E-site tRNA. The protein is Small ribosomal subunit protein uS7 of Rickettsia prowazekii (strain Madrid E).